A 348-amino-acid polypeptide reads, in one-letter code: Uroporphyrinogen decarboxylase (348 aa).

Substrate is bound by residues 27–31 (RQAGR), F46, D76, Y152, S207, and H320.

This sequence belongs to the uroporphyrinogen decarboxylase family. In terms of assembly, homodimer.

It localises to the cytoplasm. It catalyses the reaction uroporphyrinogen III + 4 H(+) = coproporphyrinogen III + 4 CO2. It participates in porphyrin-containing compound metabolism; protoporphyrin-IX biosynthesis; coproporphyrinogen-III from 5-aminolevulinate: step 4/4. Catalyzes the decarboxylation of four acetate groups of uroporphyrinogen-III to yield coproporphyrinogen-III. The protein is Uroporphyrinogen decarboxylase of Bacillus thuringiensis (strain Al Hakam).